The following is a 215-amino-acid chain: Adenylate kinase (215 aa).

10–15 (GAGKGT) serves as a coordination point for ATP. The segment at 30 to 59 (STGDMLRAAVKAETELGLKAKSVMDSGGLV) is NMP. Residues Thr-31, Arg-36, 57–59 (GLV), 85–88 (GFPR), and Gln-92 contribute to the AMP site. The interval 122-159 (GRRVHEGSGRIYHTIFNPPKVECIDDVTGEPLLQRKDD) is LID. ATP contacts are provided by residues Arg-123 and 132-133 (IY). Residues Arg-156 and Arg-167 each coordinate AMP. Gly-201 contacts ATP.

This sequence belongs to the adenylate kinase family. As to quaternary structure, monomer.

It is found in the cytoplasm. It catalyses the reaction AMP + ATP = 2 ADP. Its pathway is purine metabolism; AMP biosynthesis via salvage pathway; AMP from ADP: step 1/1. Functionally, catalyzes the reversible transfer of the terminal phosphate group between ATP and AMP. Plays an important role in cellular energy homeostasis and in adenine nucleotide metabolism. This Pseudomonas savastanoi pv. phaseolicola (strain 1448A / Race 6) (Pseudomonas syringae pv. phaseolicola (strain 1448A / Race 6)) protein is Adenylate kinase.